A 684-amino-acid polypeptide reads, in one-letter code: Protein real-time (684 aa).

The PRELI/MSF1 domain occupies 2–178 (VQKYESPVRI…FVNELKQEGI (177 aa)). A CRAL-TRIO domain is found at 297–474 (TPAVVEKYFP…FLGGSCNVID (178 aa)). A GOLD domain is found at 537 to 684 (HHGLYKAVDL…GFSSNSLQSR (148 aa)).

The protein localises to the mitochondrion. The protein is Protein real-time of Anopheles gambiae (African malaria mosquito).